A 447-amino-acid polypeptide reads, in one-letter code: Exodeoxyribonuclease 7 large subunit (447 aa).

This sequence belongs to the XseA family. In terms of assembly, heterooligomer composed of large and small subunits.

It localises to the cytoplasm. The catalysed reaction is Exonucleolytic cleavage in either 5'- to 3'- or 3'- to 5'-direction to yield nucleoside 5'-phosphates.. Its function is as follows. Bidirectionally degrades single-stranded DNA into large acid-insoluble oligonucleotides, which are then degraded further into small acid-soluble oligonucleotides. In Streptococcus mutans serotype c (strain ATCC 700610 / UA159), this protein is Exodeoxyribonuclease 7 large subunit.